Reading from the N-terminus, the 2062-residue chain is Ankyrin repeat domain-containing protein 12 (2062 aa).

Disordered regions lie at residues 1–119 (MPKS…GNKK) and 145–188 (ARDN…GETP). Positions 9–20 (PIQSENSDSDSN) are enriched in polar residues. Basic and acidic residues-rich tracts occupy residues 41 to 57 (PKIE…EKSS) and 100 to 117 (YSEK…EAGN). Residues 145-172 (ARDNSPDSTPNHPSQTTPAQKKTPSSSS) show a composition bias toward polar residues. At Ser-149 the chain carries Phosphoserine. The span at 173–187 (RQKDKVNKRNERGET) shows a compositional bias: basic and acidic residues. ANK repeat units lie at residues 184 to 213 (RGET…NVNV), 217 to 246 (AGWT…DVNT), and 250 to 280 (DDDT…PFQA). Disordered regions lie at residues 301–338 (KREV…TEKD), 409–501 (KSFK…TRIT), 538–577 (ISTG…MSLQ), 609–683 (QKDF…DSAK), 727–788 (EKNI…FTSL), 812–1073 (EKHI…LVND), 1097–1227 (KHKE…RPPV), and 1328–1350 (EESN…KPEV). Residues 306–318 (LSDDDESYTDSEE) are compositionally biased toward acidic residues. 2 stretches are compositionally biased toward polar residues: residues 319–328 (AQSVNPSSVD) and 437–454 (KKIS…NSDM). Basic and acidic residues predominate over residues 455–467 (QTKKEYVVSGEHK). Over residues 468–480 (QKGKVKRKLKNQN) the composition is skewed to basic residues. Over residues 481-498 (KNKENQELKQEKEGKENT) the composition is skewed to basic and acidic residues. Ser-543 is modified (phosphoserine). Residues 565–575 (TCLSPGSSEMS) show a composition bias toward polar residues. Composition is skewed to basic and acidic residues over residues 609-631 (QKDF…DHSP), 639-649 (TLKKMDKEGKT), 658-683 (KERE…DSAK), 727-784 (EKNI…KDSE), 812-969 (EKHI…DKES), 977-1037 (HIQE…KDKI), 1061-1072 (KDTRPKEKRLVN), and 1103-1157 (KQKE…KQPK). Ser-630 is modified (phosphoserine). Residue Ser-861 is modified to Phosphoserine. Polar residues predominate over residues 1161-1189 (SNRSQSVDTKNVMTLGKSSFVSDNSLNRS). Residues 1200-1213 (SSRSVSMISVASSE) are compositionally biased toward low complexity. Over residues 1328–1344 (EESNQGSLLTVPGDTSP) the composition is skewed to polar residues. Ser-1401 bears the Phosphoserine mark. Disordered stretches follow at residues 1721-1744 (NAED…NTMA) and 1756-1795 (LLSE…VPQP). Residues 1729-1744 (NQIPQRMTRNKANTMA) are compositionally biased toward polar residues.

As to quaternary structure, interacts with the PAS region of the p160 coactivators.

It localises to the nucleus. In terms of biological role, may recruit HDACs to the p160 coactivators/nuclear receptor complex to inhibit ligand-dependent transactivation. In Homo sapiens (Human), this protein is Ankyrin repeat domain-containing protein 12 (ANKRD12).